We begin with the raw amino-acid sequence, 440 residues long: ATP-dependent protease ATPase subunit HslU (440 aa).

ATP is bound by residues valine 18, 60-65, aspartate 254, glutamate 319, and arginine 391; that span reads GVGKTE.

Belongs to the ClpX chaperone family. HslU subfamily. As to quaternary structure, a double ring-shaped homohexamer of HslV is capped on each side by a ring-shaped HslU homohexamer. The assembly of the HslU/HslV complex is dependent on binding of ATP.

The protein resides in the cytoplasm. Functionally, ATPase subunit of a proteasome-like degradation complex; this subunit has chaperone activity. The binding of ATP and its subsequent hydrolysis by HslU are essential for unfolding of protein substrates subsequently hydrolyzed by HslV. HslU recognizes the N-terminal part of its protein substrates and unfolds these before they are guided to HslV for hydrolysis. This chain is ATP-dependent protease ATPase subunit HslU, found in Cellvibrio japonicus (strain Ueda107) (Pseudomonas fluorescens subsp. cellulosa).